A 152-amino-acid chain; its full sequence is Superoxide dismutase [Cu-Zn] (152 aa).

Residues histidine 45, histidine 47, and histidine 62 each contribute to the Cu cation site. A disulfide bridge links cysteine 56 with cysteine 145. Zn(2+) contacts are provided by histidine 62, histidine 70, histidine 79, and aspartate 82. Histidine 119 provides a ligand contact to Cu cation.

It belongs to the Cu-Zn superoxide dismutase family. In terms of assembly, homodimer. Cu cation is required as a cofactor. It depends on Zn(2+) as a cofactor.

The protein localises to the cytoplasm. The catalysed reaction is 2 superoxide + 2 H(+) = H2O2 + O2. In terms of biological role, destroys radicals which are normally produced within the cells and which are toxic to biological systems. The chain is Superoxide dismutase [Cu-Zn] (SODCC) from Ipomoea batatas (Sweet potato).